The primary structure comprises 434 residues: tRNA dimethylallyltransferase (434 aa).

10 to 17 contacts ATP; it reads GTTGAGKS. 12-17 lines the substrate pocket; sequence TGAGKS. 2 interaction with substrate tRNA regions span residues 35-38 and 166-170; these read DSMQ and RKIRR. Positions 211–233 are interaction with isopentenylpyrophosphate transferase; sequence SLVLMPRLDKRVDKMLSHGLVDE. Interaction with substrate tRNA stretches follow at residues 256 to 258, 281 to 299, and 291 to 298; these read QCI, RMKV…WIQS, and KSQKKWIQ. The segment at 380 to 416 adopts a Matrin-type zinc-finger fold; that stretch reads FVCEECLDKRGDPFTVIGEDAFNVHIKSRKHKTTVRR.

Belongs to the IPP transferase family.

It localises to the mitochondrion. Its subcellular location is the cytoplasm. It is found in the nucleus. The enzyme catalyses adenosine(37) in tRNA + dimethylallyl diphosphate = N(6)-dimethylallyladenosine(37) in tRNA + diphosphate. Catalyzes the transfer of a dimethylallyl group onto the adenine at position 37 of both cytosolic and mitochondrial tRNAs, leading to the formation of N6-(dimethylallyl)adenosine (i(6)A). This is tRNA dimethylallyltransferase (tit1) from Schizosaccharomyces pombe (strain 972 / ATCC 24843) (Fission yeast).